Reading from the N-terminus, the 247-residue chain is ATP synthase subunit a, chloroplastic (247 aa).

5 helical membrane-spanning segments follow: residues 38-58 (QVLITSWVVIAILLGSATLAV), 95-115 (VPFIGTMFLFIFVSNWSGALL), 134-154 (INTTVALALLTSVAYFYAGIS), 199-219 (LVVVVLVSLVPLVVPIPVMFL), and 220-240 (GLFTSGIQALIFATLAAAYIG).

It belongs to the ATPase A chain family. In terms of assembly, F-type ATPases have 2 components, CF(1) - the catalytic core - and CF(0) - the membrane proton channel. CF(1) has five subunits: alpha(3), beta(3), gamma(1), delta(1), epsilon(1). CF(0) has four main subunits: a, b, b' and c.

Its subcellular location is the plastid. The protein localises to the chloroplast thylakoid membrane. In terms of biological role, key component of the proton channel; it plays a direct role in the translocation of protons across the membrane. This Daucus carota (Wild carrot) protein is ATP synthase subunit a, chloroplastic.